We begin with the raw amino-acid sequence, 488 residues long: Glycogen synthase (488 aa).

ADP-alpha-D-glucose is bound at residue Arg20.

The protein belongs to the glycosyltransferase 1 family. Bacterial/plant glycogen synthase subfamily.

The enzyme catalyses [(1-&gt;4)-alpha-D-glucosyl](n) + ADP-alpha-D-glucose = [(1-&gt;4)-alpha-D-glucosyl](n+1) + ADP + H(+). Its pathway is glycan biosynthesis; glycogen biosynthesis. In terms of biological role, synthesizes alpha-1,4-glucan chains using ADP-glucose. This Chlorobaculum parvum (strain DSM 263 / NCIMB 8327) (Chlorobium vibrioforme subsp. thiosulfatophilum) protein is Glycogen synthase.